Reading from the N-terminus, the 177-residue chain is Protein C (177 aa).

The segment covering 1–10 (MSTKAWNASR) has biased composition (polar residues). The disordered stretch occupies residues 1–38 (MSTKAWNASRLSGPDPSTPWSLRKPLQHGSRPPKGKRL).

The protein belongs to the morbillivirus protein C family.

The protein is Protein C (P/V/C) of Rinderpest virus (strain RBOK) (RDV).